A 233-amino-acid chain; its full sequence is Hydroxyacylglutathione hydrolase (233 aa).

Zn(2+) is bound by residues histidine 52, histidine 54, aspartate 56, histidine 57, histidine 108, aspartate 125, and histidine 163.

The protein belongs to the metallo-beta-lactamase superfamily. Glyoxalase II family. As to quaternary structure, monomer. Requires Zn(2+) as cofactor.

The enzyme catalyses an S-(2-hydroxyacyl)glutathione + H2O = a 2-hydroxy carboxylate + glutathione + H(+). The protein operates within secondary metabolite metabolism; methylglyoxal degradation; (R)-lactate from methylglyoxal: step 2/2. Thiolesterase that catalyzes the hydrolysis of S-D-lactoyl-glutathione to form glutathione and D-lactic acid. The protein is Hydroxyacylglutathione hydrolase of Pasteurella multocida (strain Pm70).